The following is a 353-amino-acid chain: uncharacterized protein (353 aa).

The tract at residues 69 to 106 (ISSATPSSTPPATRASSRLQPPKGHQAGGSNSQQQQPS) is disordered. The segment covering 70–86 (SSATPSSTPPATRASSR) has biased composition (low complexity). A coiled-coil region spans residues 319-353 (GENKEKKMREMSRVYREMTRQMDDTRRDLDRLNQG).

This is an uncharacterized protein from Gibberella zeae (strain ATCC MYA-4620 / CBS 123657 / FGSC 9075 / NRRL 31084 / PH-1) (Wheat head blight fungus).